We begin with the raw amino-acid sequence, 274 residues long: tRNA-cytidine(32) 2-sulfurtransferase (274 aa).

Positions 40 to 45 match the PP-loop motif motif; it reads SGGKDS. 3 residues coordinate [4Fe-4S] cluster: Cys115, Cys118, and Cys206.

It belongs to the TtcA family. As to quaternary structure, homodimer. Requires Mg(2+) as cofactor. [4Fe-4S] cluster serves as cofactor.

The protein localises to the cytoplasm. It carries out the reaction cytidine(32) in tRNA + S-sulfanyl-L-cysteinyl-[cysteine desulfurase] + AH2 + ATP = 2-thiocytidine(32) in tRNA + L-cysteinyl-[cysteine desulfurase] + A + AMP + diphosphate + H(+). Its pathway is tRNA modification. In terms of biological role, catalyzes the ATP-dependent 2-thiolation of cytidine in position 32 of tRNA, to form 2-thiocytidine (s(2)C32). The sulfur atoms are provided by the cysteine/cysteine desulfurase (IscS) system. In Pseudomonas fluorescens (strain Pf0-1), this protein is tRNA-cytidine(32) 2-sulfurtransferase.